Here is a 133-residue protein sequence, read N- to C-terminus: Phosphoribosyl-AMP cyclohydrolase (133 aa).

Asp-90 contributes to the Mg(2+) binding site. Cys-91 contributes to the Zn(2+) binding site. The Mg(2+) site is built by Asp-92 and Asp-94. Positions 107 and 114 each coordinate Zn(2+).

Belongs to the PRA-CH family. Homodimer. Mg(2+) is required as a cofactor. Zn(2+) serves as cofactor.

It localises to the cytoplasm. It carries out the reaction 1-(5-phospho-beta-D-ribosyl)-5'-AMP + H2O = 1-(5-phospho-beta-D-ribosyl)-5-[(5-phospho-beta-D-ribosylamino)methylideneamino]imidazole-4-carboxamide. The protein operates within amino-acid biosynthesis; L-histidine biosynthesis; L-histidine from 5-phospho-alpha-D-ribose 1-diphosphate: step 3/9. Catalyzes the hydrolysis of the adenine ring of phosphoribosyl-AMP. The sequence is that of Phosphoribosyl-AMP cyclohydrolase from Streptomyces avermitilis (strain ATCC 31267 / DSM 46492 / JCM 5070 / NBRC 14893 / NCIMB 12804 / NRRL 8165 / MA-4680).